Here is an 89-residue protein sequence, read N- to C-terminus: Small ribosomal subunit protein uS15 (89 aa).

It belongs to the universal ribosomal protein uS15 family. In terms of assembly, part of the 30S ribosomal subunit. Forms a bridge to the 50S subunit in the 70S ribosome, contacting the 23S rRNA.

In terms of biological role, one of the primary rRNA binding proteins, it binds directly to 16S rRNA where it helps nucleate assembly of the platform of the 30S subunit by binding and bridging several RNA helices of the 16S rRNA. Its function is as follows. Forms an intersubunit bridge (bridge B4) with the 23S rRNA of the 50S subunit in the ribosome. This is Small ribosomal subunit protein uS15 from Magnetococcus marinus (strain ATCC BAA-1437 / JCM 17883 / MC-1).